Reading from the N-terminus, the 263-residue chain is Sulfur carrier protein FdhD (263 aa).

The active-site Cysteine persulfide intermediate is C107.

This sequence belongs to the FdhD family.

The protein resides in the cytoplasm. In terms of biological role, required for formate dehydrogenase (FDH) activity. Acts as a sulfur carrier protein that transfers sulfur from IscS to the molybdenum cofactor prior to its insertion into FDH. This is Sulfur carrier protein FdhD from Bacillus licheniformis (strain ATCC 14580 / DSM 13 / JCM 2505 / CCUG 7422 / NBRC 12200 / NCIMB 9375 / NCTC 10341 / NRRL NRS-1264 / Gibson 46).